A 407-amino-acid chain; its full sequence is Indoleamine 2,3-dioxygenase 1 (407 aa).

Histidine 350 lines the heme b pocket. The segment at serine 362–valine 388 is disordered.

This sequence belongs to the indoleamine 2,3-dioxygenase family. Monomer. The cofactor is heme b.

It is found in the cytoplasm. The protein resides in the cytosol. The enzyme catalyses D-tryptophan + O2 = N-formyl-D-kynurenine. It carries out the reaction L-tryptophan + O2 = N-formyl-L-kynurenine. Activity is inhibited by and MTH-trp (methylthiohydantoin-DL-tryptophan), modestly inhibited by L-1MT (1-methyl-L-tryptophan) but not D-1MT (1-methyl-D-tryptophan). Functionally, catalyzes the first and rate limiting step of the catabolism of the essential amino acid tryptophan along the kynurenine pathway. Involved in the peripheral immune tolerance, contributing to maintain homeostasis by preventing autoimmunity or immunopathology that would result from uncontrolled and overreacting immune responses. Tryptophan shortage inhibits T lymphocytes division and accumulation of tryptophan catabolites induces T-cell apoptosis and differentiation of regulatory T-cells. Acts as a suppressor of anti-tumor immunity. Limits the growth of intracellular pathogens by depriving tryptophan. Protects the fetus from maternal immune rejection. The polypeptide is Indoleamine 2,3-dioxygenase 1 (Rattus norvegicus (Rat)).